The following is a 488-amino-acid chain: Glutamyl-tRNA(Gln) amidotransferase subunit A (488 aa).

Active-site charge relay system residues include Lys-77 and Ser-152. Ser-176 acts as the Acyl-ester intermediate in catalysis.

Belongs to the amidase family. GatA subfamily. In terms of assembly, heterotrimer of A, B and C subunits.

The catalysed reaction is L-glutamyl-tRNA(Gln) + L-glutamine + ATP + H2O = L-glutaminyl-tRNA(Gln) + L-glutamate + ADP + phosphate + H(+). Its function is as follows. Allows the formation of correctly charged Gln-tRNA(Gln) through the transamidation of misacylated Glu-tRNA(Gln) in organisms which lack glutaminyl-tRNA synthetase. The reaction takes place in the presence of glutamine and ATP through an activated gamma-phospho-Glu-tRNA(Gln). The chain is Glutamyl-tRNA(Gln) amidotransferase subunit A from Streptococcus equi subsp. zooepidemicus (strain MGCS10565).